The following is a 488-amino-acid chain: Malonate-semialdehyde dehydrogenase (488 aa).

The NAD(+) site is built by alanine 150, phenylalanine 152, lysine 176, glutamate 179, arginine 180, serine 229, and threonine 251. The Nucleophile role is filled by cysteine 284. Position 382 (glutamate 382) interacts with NAD(+).

Belongs to the aldehyde dehydrogenase family. IolA subfamily. In terms of assembly, homotetramer.

The enzyme catalyses 3-oxopropanoate + NAD(+) + CoA + H2O = hydrogencarbonate + acetyl-CoA + NADH + H(+). The catalysed reaction is 2-methyl-3-oxopropanoate + NAD(+) + CoA + H2O = propanoyl-CoA + hydrogencarbonate + NADH + H(+). The protein operates within polyol metabolism; myo-inositol degradation into acetyl-CoA; acetyl-CoA from myo-inositol: step 7/7. Its function is as follows. Catalyzes the oxidation of malonate semialdehyde (MSA) and methylmalonate semialdehyde (MMSA) into acetyl-CoA and propanoyl-CoA, respectively. Is involved in a myo-inositol catabolic pathway. Bicarbonate, and not CO2, is the end-product of the enzymatic reaction. The polypeptide is Malonate-semialdehyde dehydrogenase (Listeria monocytogenes serotype 4a (strain HCC23)).